The primary structure comprises 389 residues: Acetylornithine deacetylase (389 aa).

A Zn(2+)-binding site is contributed by His85. Asp87 is an active-site residue. A Zn(2+)-binding site is contributed by Asp117. Glu149 is an active-site residue. 3 residues coordinate Zn(2+): Glu150, Glu174, and His360.

The protein belongs to the peptidase M20A family. ArgE subfamily. In terms of assembly, homodimer. The cofactor is Zn(2+). It depends on Co(2+) as a cofactor. Glutathione serves as cofactor.

It localises to the cytoplasm. The enzyme catalyses N(2)-acetyl-L-ornithine + H2O = L-ornithine + acetate. It participates in amino-acid biosynthesis; L-arginine biosynthesis; L-ornithine from N(2)-acetyl-L-ornithine (linear): step 1/1. Its function is as follows. Catalyzes the hydrolysis of the amide bond of N(2)-acetylated L-amino acids. Cleaves the acetyl group from N-acetyl-L-ornithine to form L-ornithine, an intermediate in L-arginine biosynthesis pathway, and a branchpoint in the synthesis of polyamines. In Yersinia pseudotuberculosis serotype O:1b (strain IP 31758), this protein is Acetylornithine deacetylase.